The primary structure comprises 245 residues: Uridylate kinase (245 aa).

Position 15–18 (15–18) interacts with ATP; it reads KLSG. Residues 23-28 are involved in allosteric activation by GTP; sequence GDEGFG. Glycine 57 provides a ligand contact to UMP. 2 residues coordinate ATP: glycine 58 and arginine 62. UMP-binding positions include aspartate 77 and 138–145; that span reads TGNPFCTT. Residues threonine 165, tyrosine 171, and aspartate 174 each contribute to the ATP site.

Belongs to the UMP kinase family. As to quaternary structure, homohexamer.

The protein resides in the cytoplasm. It catalyses the reaction UMP + ATP = UDP + ADP. It functions in the pathway pyrimidine metabolism; CTP biosynthesis via de novo pathway; UDP from UMP (UMPK route): step 1/1. Allosterically activated by GTP. Inhibited by UTP. In terms of biological role, catalyzes the reversible phosphorylation of UMP to UDP. This is Uridylate kinase from Shewanella baltica (strain OS155 / ATCC BAA-1091).